Here is a 193-residue protein sequence, read N- to C-terminus: MRLCDRDIIKWLDEGKLVIAPRPPIERINGATADVRLGNQFRVFCGHTAAYIDLSGPKDEVSAALDRVMSDEIILPDDEVFFLHPGELALAVTLESVTLPDDLVGWLDGRSSLARLGLMVHVTAHRIDPGWHGQIVLEFYNSGKLPLALRPGMVIGALSFEPLSGSADRPYNRRQDAKYKNQQGAVSSRIDED.

DCTP contacts are provided by residues 110 to 115, Asp-128, 136 to 138, Tyr-171, Lys-178, and Gln-182; these read RSSLAR and VLE. The Proton donor/acceptor role is filled by Glu-138. The tract at residues 168-193 is disordered; that stretch reads DRPYNRRQDAKYKNQQGAVSSRIDED. A compositionally biased stretch (basic and acidic residues) spans 170 to 179; the sequence is PYNRRQDAKY.

It belongs to the dCTP deaminase family. In terms of assembly, homotrimer.

The enzyme catalyses dCTP + H2O + H(+) = dUTP + NH4(+). Its pathway is pyrimidine metabolism; dUMP biosynthesis; dUMP from dCTP (dUTP route): step 1/2. Its function is as follows. Catalyzes the deamination of dCTP to dUTP. In Photorhabdus laumondii subsp. laumondii (strain DSM 15139 / CIP 105565 / TT01) (Photorhabdus luminescens subsp. laumondii), this protein is dCTP deaminase.